We begin with the raw amino-acid sequence, 146 residues long: Hemoglobin subunit beta (146 aa).

The residue at position 1 (Val-1) is an N-acetylvaline. The 145-residue stretch at 2–146 (HLTADEKAAV…VANALAHKYH (145 aa)) folds into the Globin domain. Thr-12 is modified (phosphothreonine). Ser-44 carries the phosphoserine modification. Lys-59 carries the post-translational modification N6-acetyllysine. Position 63 (His-63) interacts with heme b. Lys-82 carries the N6-acetyllysine modification. Residue His-92 participates in heme b binding. Position 93 is an S-nitrosocysteine (Cys-93). Lys-144 carries the post-translational modification N6-acetyllysine.

This sequence belongs to the globin family. In terms of assembly, heterotetramer of two alpha chains and two beta chains. As to expression, red blood cells.

Functionally, involved in oxygen transport from the lung to the various peripheral tissues. The polypeptide is Hemoglobin subunit beta (HBB) (Odobenus rosmarus divergens (Pacific walrus)).